A 100-amino-acid polypeptide reads, in one-letter code: NADH-quinone oxidoreductase subunit K (100 aa).

A run of 3 helical transmembrane segments spans residues 4–24 (LQHG…GLVI), 28–48 (LLFM…AFVV), and 60–80 (VMYI…LALL).

The protein belongs to the complex I subunit 4L family. NDH-1 is composed of 13 different subunits. Subunits NuoA, H, J, K, L, M, N constitute the membrane sector of the complex.

It is found in the cell inner membrane. The catalysed reaction is a quinone + NADH + 5 H(+)(in) = a quinol + NAD(+) + 4 H(+)(out). Functionally, NDH-1 shuttles electrons from NADH, via FMN and iron-sulfur (Fe-S) centers, to quinones in the respiratory chain. The immediate electron acceptor for the enzyme in this species is believed to be ubiquinone. Couples the redox reaction to proton translocation (for every two electrons transferred, four hydrogen ions are translocated across the cytoplasmic membrane), and thus conserves the redox energy in a proton gradient. The chain is NADH-quinone oxidoreductase subunit K from Shigella boydii serotype 18 (strain CDC 3083-94 / BS512).